Reading from the N-terminus, the 151-residue chain is Decarboxylase nsrE (151 aa).

Residues 31-126 form the EthD domain; sequence AGMTEEDYHN…VGDHENFADT (96 aa).

The protein belongs to the tpcK family.

It catalyses the reaction atrochrysone carboxylate + H(+) = atrochrysone + CO2. It participates in secondary metabolite biosynthesis. Decarboxylase; part of the gene cluster that mediates the biosynthesis of the tetrahydroxanthone dimer neosartorin, which exhibits antibacterial activity. The two different monomeric units appear to be synthesized by the same set of enzymes, among which the Baeyer-Villiger monooxygenase nsrF is the key enzyme for the divergence of the biosynthetic routes. The pathway begins with the synthesis of atrochrysone thioester by the polyketide synthase nsrB. The atrochrysone carboxyl ACP thioesterase nsrC then breaks the thioester bond and releases the atrochrysone carboxylic acid from AacuL. Atrochrysone carboxylic acid is decarboxylated by the decarboxylase nsrE, and oxidized by the anthrone oxygenase nsrD to yield emodin. Emodin is then reduced to emodin hydroquinone by the oxidoreductase nsrR. A-ring reduction by the short chain dehydrogenase nsrJ, dehydration by the scytalone dehydratase-like protein nsrI and probable spontaneous re-oxidation, results in overall deoxygenation to chrysophanol. The Baeyer-Villiger monooxygenase nsrF accepts chrysophanol as a substrate to insert one oxygen atom at two different positions to yield the precursors of both monomric units. NsrF is promiscuous/flexible in interacting with the 2 (non methylated and methylated) aromatic rings of chrysophanol, thus diverging the biosynthetic pathway at this point. After the hydrolysis of the lactones, methylesterification by the methyltransferase nsrG yields respectively moniliphenone and 2,2',6'-trihydroxy-4-methyl-6-methoxya-cyldiphenylmethanone. The next steps are the hydroxylation by the FAD-dependent monooxygenase nsrK, followed by isomerization by the monooxygenase nsrQ. The short chain dehydrogenase/reductase nsrO then catalyzes the C-5 ketoreduction to give the xanthone skeleton of blennolide C and 5-acetylblennolide A. The acetyltransferase nsrL has a strict substrate specificity and uses only blennolide A but not blennolide C to yield 5-acetylblennolide A as the single-acetylated product. In the final step of the biosynthesis, the heterodimerization of the 2 xanthones, blennolide C and 5-acetylblennolide A, is catalyzed by the cytochrome P450 monooxygenase nsrP. NsrP can utilize at least three different xanthones as its substrates to perform the dimerization reaction. In Aspergillus novofumigatus (strain IBT 16806), this protein is Decarboxylase nsrE.